The following is a 982-amino-acid chain: Glutamate [NMDA] receptor subunit 1 (982 aa).

Positions 1-22 (MRVAFIYRWLLCGAAIVNVLVA) are cleaved as a signal peptide. The Extracellular portion of the chain corresponds to 23-568 (QRHTASDNPS…TLVSFLQPFS (546 aa)). 7 N-linked (GlcNAc...) asparagine glycosylation sites follow: asparagine 253, asparagine 309, asparagine 340, asparagine 392, asparagine 449, asparagine 476, and asparagine 496. Glycine contacts are provided by residues 525–527 (PLT) and arginine 532. A helical membrane pass occupies residues 569–589 (NTLWILVMVSVHVVALVLYLL). The Cytoplasmic portion of the chain corresponds to 590–646 (DRFSPFGRFKLSHSDSNEEKALNLSSAVWFAWGVLLNSGIGEGTPRSFSARVLGMVW). Residues 647 to 667 (AGFAMIIVASYTANLAAFLVL) form a helical membrane-spanning segment. Residues 668 to 826 (ERPKTKLSGI…KTPNTLGLKN (159 aa)) lie on the Extracellular side of the membrane. N-linked (GlcNAc...) asparagine glycosylation occurs at asparagine 688. Residues serine 698 and aspartate 742 each coordinate glycine. Residues 827 to 847 (MAGVFILVGVGIAGGVGLIII) traverse the membrane as a helical segment. Topologically, residues 848–982 (EVIYKKHQVK…YTSDVSHLVV (135 aa)) are cytoplasmic. Residues 948–982 (LTASQLGLGKTRPQQNPLPPRYSPGYTSDVSHLVV) are disordered. Positions 972 to 982 (GYTSDVSHLVV) are enriched in polar residues.

It belongs to the glutamate-gated ion channel (TC 1.A.10.1) family. In terms of assembly, forms a heteromeric NMDA channel with Nmdar2.

The protein localises to the cell membrane. It localises to the postsynaptic cell membrane. It is found in the postsynaptic density. Functionally, NMDA receptor subtype of glutamate-gated ion channels with high calcium permeability and voltage-dependent sensitivity to magnesium. Mediated by glycine. This protein plays a key role in synaptic plasticity, synaptogenesis, excitotoxicity, memory acquisition and learning. It mediates neuronal functions in glutamate neurotransmission. Is involved in the cell surface targeting of NMDA receptors. Plays a role in associative learning and in long-term memory consolidation. This chain is Glutamate [NMDA] receptor subunit 1, found in Drosophila grimshawi (Hawaiian fruit fly).